We begin with the raw amino-acid sequence, 342 residues long: Succinylglutamate desuccinylase (342 aa).

Zn(2+) contacts are provided by H63, E66, and H155. E219 is a catalytic residue.

This sequence belongs to the AspA/AstE family. Succinylglutamate desuccinylase subfamily. The cofactor is Zn(2+).

The enzyme catalyses N-succinyl-L-glutamate + H2O = L-glutamate + succinate. Its pathway is amino-acid degradation; L-arginine degradation via AST pathway; L-glutamate and succinate from L-arginine: step 5/5. Functionally, transforms N(2)-succinylglutamate into succinate and glutamate. The sequence is that of Succinylglutamate desuccinylase from Vibrio vulnificus (strain YJ016).